The following is a 560-amino-acid chain: Membrane-bound O-acyltransferase GUP1 (560 aa).

The Extracellular portion of the chain corresponds to 1–43; that stretch reads MSLISILSPLITSEGLDSRIKPSPKKDASTTTKPSLWKTTEFK. Residues 44-64 form a helical membrane-spanning segment; that stretch reads FYYIAFLVVVPLMFYAGLQAS. Over 65–101 the chain is Cytoplasmic; it reads SPENPNYARYERLLSQGWLFGRKVDNSDSQYRFFRDN. Residues 102-122 traverse the membrane as a helical segment; that stretch reads FALLSVLMLVHTSIKRIVLYS. Topologically, residues 123 to 131 are extracellular; it reads TNITKLRFD. The helical transmembrane segment at 132–152 threads the bilayer; the sequence is LIFGLIFLVAAHGVNSIRILA. At 153-165 the chain is on the cytoplasmic side; it reads HMLILYAIAHVLK. Residues 166–185 traverse the membrane as a helical segment; sequence NFRRIATISIWIYGISTLFI. The Extracellular segment spans residues 186–276; the sequence is NDNFRAYPFG…AAHPIQDYSL (91 aa). Residues 277–297 traverse the membrane as a helical segment; the sequence is MNYIAYVTYTPLFIAGPIITF. Residues 298–322 are Cytoplasmic-facing; that stretch reads NDYVYQSKHTLPSINFKFIFYYAVR. Residues 323–343 traverse the membrane as a helical segment; sequence FVIALLSMEFILHFLHVVAIS. The Extracellular portion of the chain corresponds to 344 to 352; that stretch reads KTKAWENDT. A helical transmembrane segment spans residues 353–373; the sequence is PFQISMIGLFNLNIIWLKLLI. Residues 374–432 are Cytoplasmic-facing; that stretch reads PWRLFRLWALLDGIDTPENMIRCVDNNYSSLAFWRAWHRSYNKWVVRYIYIPLGGSKNR. A run of 2 helical transmembrane segments spans residues 433–453 and 454–474; these read VLTSLAVFSFVAIWHDIELKL and LLWGWLIVLFLLPEIFATQIF. H447 is an active-site residue. Residues 475–485 lie on the Cytoplasmic side of the membrane; that stretch reads SHYTDAVWYRH. Residues 486-506 traverse the membrane as a helical segment; the sequence is VCAVGAVFNIWVMMIANLFGF. At 507–526 the chain is on the extracellular side; the sequence is CLGSDGTKKLLSDMFCTVSG. Residues 527-547 form a helical membrane-spanning segment; the sequence is FKFVILASVSLFIAVQIMFEI. Residues 548 to 560 are Cytoplasmic-facing; that stretch reads REEEKRHGIYLKC.

The protein belongs to the membrane-bound acyltransferase family. In terms of assembly, interacts with mitochondrial outer membrane voltage-dependent anion channel (VDAC) POR1.

It is found in the cell membrane. Its subcellular location is the endoplasmic reticulum membrane. The protein localises to the mitochondrion membrane. Its function is as follows. Membrane-bound O-acyltransferase involved in the remodeling of glycosylphosphatidylinositol (GPI) anchors. Acts only on GPI-anchored proteins, but not on free GPI lipids. Acts as an acyltransferase for GPI anchors that adds C26 fatty acids to the sn2 position of lyso-PI-containing GPI anchors. PER1 first deacylates, GUP1 subsequently reacylates the anchor lipid, thus replacing a shorter fatty acid (C16:0 or C18:0) by C26:0. Also involved in lipid metabolism, having profound effects on sphingolipid-sterol-ordered domains integrity and assembly. Together with GUP2, has an influence on the chemical composition of the yeast extracellular matrix (yECM) in yeast multicellular aggregates, such as biofilms and colonies. Involved in cell integrity and apoptosis. This chain is Membrane-bound O-acyltransferase GUP1 (GUP1), found in Saccharomyces cerevisiae (strain ATCC 204508 / S288c) (Baker's yeast).